Consider the following 362-residue polypeptide: Probable dual-specificity RNA methyltransferase RlmN (362 aa).

E105 serves as the catalytic Proton acceptor. In terms of domain architecture, Radical SAM core spans 111-344 (HEYGNSICVT…VTIRREQGHD (234 aa)). C118 and C349 are joined by a disulfide. Positions 125, 129, and 132 each coordinate [4Fe-4S] cluster. S-adenosyl-L-methionine contacts are provided by residues 175–176 (GE), S207, 230–232 (SLH), and N306. Catalysis depends on C349, which acts as the S-methylcysteine intermediate.

The protein belongs to the radical SAM superfamily. RlmN family. [4Fe-4S] cluster serves as cofactor.

It localises to the cytoplasm. The enzyme catalyses adenosine(2503) in 23S rRNA + 2 reduced [2Fe-2S]-[ferredoxin] + 2 S-adenosyl-L-methionine = 2-methyladenosine(2503) in 23S rRNA + 5'-deoxyadenosine + L-methionine + 2 oxidized [2Fe-2S]-[ferredoxin] + S-adenosyl-L-homocysteine. It carries out the reaction adenosine(37) in tRNA + 2 reduced [2Fe-2S]-[ferredoxin] + 2 S-adenosyl-L-methionine = 2-methyladenosine(37) in tRNA + 5'-deoxyadenosine + L-methionine + 2 oxidized [2Fe-2S]-[ferredoxin] + S-adenosyl-L-homocysteine. Specifically methylates position 2 of adenine 2503 in 23S rRNA and position 2 of adenine 37 in tRNAs. This chain is Probable dual-specificity RNA methyltransferase RlmN, found in Bacillus mycoides (strain KBAB4) (Bacillus weihenstephanensis).